The chain runs to 271 residues: ATP synthase subunit delta (271 aa).

It belongs to the ATPase delta chain family. In terms of assembly, F-type ATPases have 2 components, F(1) - the catalytic core - and F(0) - the membrane proton channel. F(1) has five subunits: alpha(3), beta(3), gamma(1), delta(1), epsilon(1). F(0) has three main subunits: a(1), b(2) and c(10-14). The alpha and beta chains form an alternating ring which encloses part of the gamma chain. F(1) is attached to F(0) by a central stalk formed by the gamma and epsilon chains, while a peripheral stalk is formed by the delta and b chains.

It is found in the cell membrane. Functionally, f(1)F(0) ATP synthase produces ATP from ADP in the presence of a proton or sodium gradient. F-type ATPases consist of two structural domains, F(1) containing the extramembraneous catalytic core and F(0) containing the membrane proton channel, linked together by a central stalk and a peripheral stalk. During catalysis, ATP synthesis in the catalytic domain of F(1) is coupled via a rotary mechanism of the central stalk subunits to proton translocation. In terms of biological role, this protein is part of the stalk that links CF(0) to CF(1). It either transmits conformational changes from CF(0) to CF(1) or is implicated in proton conduction. This is ATP synthase subunit delta from Corynebacterium kroppenstedtii (strain DSM 44385 / JCM 11950 / CIP 105744 / CCUG 35717).